Reading from the N-terminus, the 361-residue chain is D-alanine--D-alanine ligase (361 aa).

Residues 134–344 (KILAQRAGVP…YTDLITKLID (211 aa)) enclose the ATP-grasp domain. 169–224 (ASQLGSDLFVKPSNQGSSVGVSHVTNEKEYKVALAEAFKYDDKVLVEETVHGTEVE) provides a ligand contact to ATP. Mg(2+) is bound by residues D297, E311, and N313.

It belongs to the D-alanine--D-alanine ligase family. Mg(2+) serves as cofactor. It depends on Mn(2+) as a cofactor.

Its subcellular location is the cytoplasm. It carries out the reaction 2 D-alanine + ATP = D-alanyl-D-alanine + ADP + phosphate + H(+). Its pathway is cell wall biogenesis; peptidoglycan biosynthesis. Functionally, cell wall formation. This chain is D-alanine--D-alanine ligase, found in Lactobacillus johnsonii (strain CNCM I-12250 / La1 / NCC 533).